Consider the following 451-residue polypeptide: Methionine aminopeptidase 2-2 (451 aa).

The disordered stretch occupies residues Met-1–Pro-97. Residues Thr-19–Pro-28 show a composition bias toward polar residues. The segment covering Glu-35–Gly-45 has biased composition (acidic residues). Residues Lys-60–Ala-73 show a composition bias toward basic residues. Residues Gly-74 to Ser-83 show a composition bias toward low complexity. A substrate-binding site is contributed by His-204. 3 residues coordinate a divalent metal cation: Asp-224, Asp-235, and His-304. His-312 lines the substrate pocket. A divalent metal cation-binding residues include Glu-337 and Glu-432.

The protein belongs to the peptidase M24A family. Methionine aminopeptidase eukaryotic type 2 subfamily. Co(2+) is required as a cofactor. Requires Zn(2+) as cofactor. The cofactor is Mn(2+). Fe(2+) serves as cofactor.

It is found in the cytoplasm. The catalysed reaction is Release of N-terminal amino acids, preferentially methionine, from peptides and arylamides.. Functionally, cotranslationally removes the N-terminal methionine from nascent proteins. The N-terminal methionine is often cleaved when the second residue in the primary sequence is small and uncharged (Met-Ala-, Cys, Gly, Pro, Ser, Thr, or Val). The chain is Methionine aminopeptidase 2-2 from Leptosphaeria maculans (strain JN3 / isolate v23.1.3 / race Av1-4-5-6-7-8) (Blackleg fungus).